A 364-amino-acid polypeptide reads, in one-letter code: B3 domain-containing protein At5g38490 (364 aa).

A disordered region spans residues 148–202 (ASTSSSSLLNLPCLEPSTETKDVPNPNYQSSSPSSCLTGKTNRKRRAVEQRKSGK). The segment at residues 260–364 (FQKLIRNDFL…GVLCFALDTE (105 aa)) is a DNA-binding region (TF-B3).

The protein resides in the nucleus. The chain is B3 domain-containing protein At5g38490 from Arabidopsis thaliana (Mouse-ear cress).